Consider the following 296-residue polypeptide: Guided entry of tail-anchored proteins factor CAMLG (296 aa).

The interval 1–79 (MESMAVATDG…SDKLNSLSVP (79 aa)) is disordered. At 1 to 189 (MESMAVATDG…NTTEEFDSFR (189 aa)) the chain is on the cytoplasmic side. The residue at position 55 (Ser55) is a Phosphoserine. Positions 61–72 (SQTKSKQQDSDK) are enriched in basic and acidic residues. The chain crosses the membrane as a helical span at residues 190-207 (IFRLVGCALLALGVRAFV). At 208 to 212 (CKYLS) the chain is on the lumenal side. A disulfide bond links Cys208 and Cys284. Residues 213 to 231 (IFAPFLTLQLAYMGLYKYF) traverse the membrane as a helical segment. At 232–269 (PKSEKKIKTTVLTAALLLSGIPAEVINRSMDTYSKMGE) the chain is on the cytoplasmic side. Residues 270–288 (VFTDLCVYFFTFIFCHELL) traverse the membrane as a helical segment. Residues 289–296 (DYWGSEVP) are Lumenal-facing.

As to quaternary structure, component of the Golgi to ER traffic (GET) complex, which is composed of GET1/WRB, CAMLG/GET2 and GET3/TRC40. Within the complex, GET1 and CAMLG form a heterotetramer which is stabilized by phosphatidylinositol binding and which binds to the GET3 homodimer. Interacts (via C-terminus) with GET1. Interacts (via N-terminus) with GET3. GET3 shows a higher affinity for CAMLG than for GET1. Interacts (via N-terminus) with TNFRSF13B/TACI (via C-terminus). In terms of assembly, (Microbial infection) Interacts with human herpes virus 8/HHV-8 protein K7; this interaction modulates intracellular calcium concentration. In terms of tissue distribution, ubiquitous. Highest levels in brain, testis and ovary.

The protein localises to the endoplasmic reticulum membrane. Required for the post-translational delivery of tail-anchored (TA) proteins to the endoplasmic reticulum. Together with GET1/WRB, acts as a membrane receptor for soluble GET3/TRC40, which recognizes and selectively binds the transmembrane domain of TA proteins in the cytosol. Required for the stability of GET1. Stimulates calcium signaling in T cells through its involvement in elevation of intracellular calcium. Essential for the survival of peripheral follicular B cells. This Homo sapiens (Human) protein is Guided entry of tail-anchored proteins factor CAMLG.